We begin with the raw amino-acid sequence, 504 residues long: Cytochrome P450 monooxygenase braC (504 aa).

A helical transmembrane segment spans residues 4–24 (LYLPTIWASTLTAATIFIVAV). Residue C448 coordinates heme.

The protein belongs to the cytochrome P450 family. It depends on heme as a cofactor.

Its subcellular location is the membrane. It functions in the pathway secondary metabolite biosynthesis. In terms of biological role, cytochrome P450 monooxygenase; part of the gene cluster that mediates the biosynthesis of the brasilane terpene glycosides brasilane D and E. The biosynthesis starts with the activity of the terpene cyclase braA that converts farnesyl pyrophosphate into the sesquiterpene alcohol trichobrasilenol. Subsequently, trichobrasilenol is glycosylated by the O-glycosyltransferase braB putatively using UDP-GlcNAc as sugar donor to yield brasilane A. The latter then undergoes two rounds of oxidation performed by the cytochrome P450 monooxygenase braC. In the first round braC hydroxylates C-12 forming brasilane D, which serves as substrate in the second round to establish the epoxide at the bond between C-5 and C-10 and oxidize the alcohol at C-12 to an aldehyde leading to the final product brasilane E. The protein is Cytochrome P450 monooxygenase braC of Annulohypoxylon truncatum (Hypoxylon truncatum).